We begin with the raw amino-acid sequence, 298 residues long: Tyrosine recombinase XerC (298 aa).

A Core-binding (CB) domain is found at Met-1 to Met-84. Residues Tyr-105–Leu-286 form the Tyr recombinase domain. Catalysis depends on residues Arg-145, Lys-169, His-238, Arg-241, and His-264. Tyr-273 (O-(3'-phospho-DNA)-tyrosine intermediate) is an active-site residue.

This sequence belongs to the 'phage' integrase family. XerC subfamily. Forms a cyclic heterotetrameric complex composed of two molecules of XerC and two molecules of XerD.

It is found in the cytoplasm. Site-specific tyrosine recombinase, which acts by catalyzing the cutting and rejoining of the recombining DNA molecules. The XerC-XerD complex is essential to convert dimers of the bacterial chromosome into monomers to permit their segregation at cell division. It also contributes to the segregational stability of plasmids. The protein is Tyrosine recombinase XerC of Staphylococcus aureus (strain JH1).